A 337-amino-acid polypeptide reads, in one-letter code: MSLSDNFADSLISAPPIRVICLVGPTGAGKTAAALHLARTFGGGVVNADSRQVYRDFPVITAQPSPEERAVCPHLLYGFLPSTEKISAGVWTDKATVVIEELCREEPGHNTSRQATSRPDGLVPLLVGGTGLYLKTLLDGIADIPRVDPAIGARLERECDALGAPALHARLASIDPDYAARIHPNDRQRAVRALEVHEGTGHALSWWHARPVPRPRYAALRIGMDMSLDELTPRLDRRIDLMLEAGALDEARAARTVCDDPAAPGWSGIGCAELYRYLTGELPWAEARLLWLRNTRAYAKRQLTWFRADKRIHWVRPDDLDAMAALACAFLRGETAE.

An ATP-binding site is contributed by Gly-24 to Thr-31. Thr-26 to Thr-31 is a substrate binding site. Interaction with substrate tRNA stretches follow at residues Asp-49 to Gln-52 and Gln-188 to Arg-192.

The protein belongs to the IPP transferase family. In terms of assembly, monomer. Requires Mg(2+) as cofactor.

The enzyme catalyses adenosine(37) in tRNA + dimethylallyl diphosphate = N(6)-dimethylallyladenosine(37) in tRNA + diphosphate. Its function is as follows. Catalyzes the transfer of a dimethylallyl group onto the adenine at position 37 in tRNAs that read codons beginning with uridine, leading to the formation of N6-(dimethylallyl)adenosine (i(6)A). In Nitratidesulfovibrio vulgaris (strain DSM 19637 / Miyazaki F) (Desulfovibrio vulgaris), this protein is tRNA dimethylallyltransferase.